Consider the following 740-residue polypeptide: Arf-GAP with coiled-coil, ANK repeat and PH domain-containing protein 1 (740 aa).

One can recognise a BAR domain in the interval 1-226 (MTVKLDFEEC…RKELGAQLHQ (226 aa)). Residues 1 to 382 (MTVKLDFEEC…RGPGQGSGHL (382 aa)) are required for formation of endosomal tubules when overexpressed with PIP5K1C. In terms of domain architecture, PH spans 265 to 360 (GLVMEGHLFK…WVSAVQSSIA (96 aa)). Residues 405 to 527 (GHVVAQVQSV…KFLTKLPEIR (123 aa)) form the Arf-GAP domain. The segment at 405–740 (GHVVAQVQSV…SRRSHDLHTL (336 aa)) is required for interaction with GULP1. The C4-type zinc finger occupies 420-443 (CCDCREPAPEWASINLGVTLCIQC). Position 485 is a 3'-nitrotyrosine (Y485). The tract at residues 525 to 566 (EIRGRRGGRGRPRGQPPVPPKPSIRPRPGSLRSKPEPPSEDL) is prevents interaction with ITGB1 when S-554 is not phosphorylated. Residues 525–581 (EIRGRRGGRGRPRGQPPVPPKPSIRPRPGSLRSKPEPPSEDLGSLHPGALLFRASGH) are disordered. Residues 538–549 (GQPPVPPKPSIR) show a composition bias toward pro residues. S554 is subject to Phosphoserine; by PKB. ANK repeat units lie at residues 606-635 (DNAT…NVNQ), 639-668 (AGRG…DLGA), and 672-702 (EGRD…EAEA).

Banana-shaped homodimer laterally assembling into tetramers, the tetramers further pack helically onto the membrane. Interacts with GTP-bound ARF6. Interacts with third cytoplasmic loop of SLC2A4/GLUT4. Interacts with CLTC. Interacts with GULP1. Forms a complex with GDP-bound ARF6 and GULP1. Interacts with ITGB1; required for ITGB1 recycling. Post-translationally, phosphorylation at Ser-554 by PKB is required for interaction with ITGB1, export of ITGB1 from recycling endosomes to the cell surface and ITGB1-dependent cell migration. In terms of tissue distribution, highest level in lung and spleen. Low level in heart, kidney, liver and pancreas.

The protein localises to the recycling endosome membrane. With respect to regulation, GAP activity stimulated by phosphatidylinositol 4,5-bisphosphate (PIP2) and phosphatidic acid. Its function is as follows. GTPase-activating protein (GAP) for ADP ribosylation factor 6 (ARF6) required for clathrin-dependent export of proteins from recycling endosomes to trans-Golgi network and cell surface. Required for regulated export of ITGB1 from recycling endosomes to the cell surface and ITGB1-dependent cell migration. In Homo sapiens (Human), this protein is Arf-GAP with coiled-coil, ANK repeat and PH domain-containing protein 1 (ACAP1).